Consider the following 484-residue polypeptide: tRNA sulfurtransferase (484 aa).

One can recognise a THUMP domain in the interval 63–167 (ERLVEALKCI…NKDLFIVTQR (105 aa)). Residues 185–186 (LM), lysine 267, glycine 289, and glutamine 298 contribute to the ATP site. A disulfide bond links cysteine 346 and cysteine 458. Residues 406 to 484 (IPENAVVVDI…GFKNVKVYRP (79 aa)) enclose the Rhodanese domain. Cysteine 458 functions as the Cysteine persulfide intermediate in the catalytic mechanism.

The protein belongs to the ThiI family.

The protein localises to the cytoplasm. It catalyses the reaction [ThiI sulfur-carrier protein]-S-sulfanyl-L-cysteine + a uridine in tRNA + 2 reduced [2Fe-2S]-[ferredoxin] + ATP + H(+) = [ThiI sulfur-carrier protein]-L-cysteine + a 4-thiouridine in tRNA + 2 oxidized [2Fe-2S]-[ferredoxin] + AMP + diphosphate. It carries out the reaction [ThiS sulfur-carrier protein]-C-terminal Gly-Gly-AMP + S-sulfanyl-L-cysteinyl-[cysteine desulfurase] + AH2 = [ThiS sulfur-carrier protein]-C-terminal-Gly-aminoethanethioate + L-cysteinyl-[cysteine desulfurase] + A + AMP + 2 H(+). It participates in cofactor biosynthesis; thiamine diphosphate biosynthesis. In terms of biological role, catalyzes the ATP-dependent transfer of a sulfur to tRNA to produce 4-thiouridine in position 8 of tRNAs, which functions as a near-UV photosensor. Also catalyzes the transfer of sulfur to the sulfur carrier protein ThiS, forming ThiS-thiocarboxylate. This is a step in the synthesis of thiazole, in the thiamine biosynthesis pathway. The sulfur is donated as persulfide by IscS. This chain is tRNA sulfurtransferase, found in Colwellia psychrerythraea (strain 34H / ATCC BAA-681) (Vibrio psychroerythus).